Consider the following 387-residue polypeptide: Phosphoglycerate kinase (387 aa).

Substrate-binding positions include 21–23, arginine 36, 59–62, arginine 113, and arginine 146; these read DLN and HLGR. ATP is bound by residues lysine 197, glutamate 314, and 340–343; that span reads GGDT.

The protein belongs to the phosphoglycerate kinase family. Monomer.

It is found in the cytoplasm. The catalysed reaction is (2R)-3-phosphoglycerate + ATP = (2R)-3-phospho-glyceroyl phosphate + ADP. It functions in the pathway carbohydrate degradation; glycolysis; pyruvate from D-glyceraldehyde 3-phosphate: step 2/5. The chain is Phosphoglycerate kinase from Pseudomonas putida (strain ATCC 700007 / DSM 6899 / JCM 31910 / BCRC 17059 / LMG 24140 / F1).